The primary structure comprises 256 residues: NAD-dependent protein deacylase 4 (256 aa).

The region spanning 1 to 250 is the Deacetylase sirtuin-type domain; that stretch reads MRLPAEALKD…AKIHESLSTG (250 aa). 19–39 provides a ligand contact to NAD(+); sequence GAGISAESGILTYLDQMPKLW. Residues Y64 and R67 each contribute to the substrate site. Position 98–101 (98–101) interacts with NAD(+); it reads QNVD. H116 functions as the Proton acceptor in the catalytic mechanism. Zn(2+)-binding residues include C124, C127, C152, and C155. Residues 192–194, 218–220, and A236 contribute to the NAD(+) site; these read GTS and NTV.

This sequence belongs to the sirtuin family. Class III subfamily. It depends on Zn(2+) as a cofactor.

The protein resides in the cytoplasm. It carries out the reaction N(6)-acetyl-L-lysyl-[protein] + NAD(+) + H2O = 2''-O-acetyl-ADP-D-ribose + nicotinamide + L-lysyl-[protein]. The catalysed reaction is N(6)-succinyl-L-lysyl-[protein] + NAD(+) + H2O = 2''-O-succinyl-ADP-D-ribose + nicotinamide + L-lysyl-[protein]. NAD-dependent lysine deacetylase and desuccinylase that specifically removes acetyl and succinyl groups on target proteins. Modulates the activities of several proteins which are inactive in their acylated form. The protein is NAD-dependent protein deacylase 4 of Pseudomonas syringae pv. tomato (strain ATCC BAA-871 / DC3000).